Here is a 363-residue protein sequence, read N- to C-terminus: Neutral protease 2 homolog NFIA_102630 (363 aa).

The signal sequence occupies residues 1–19; the sequence is MKVTVLASAILALINGALA. Residues 20 to 172 constitute a propeptide that is removed on maturation; it reads LPANAPTLDV…PQAIKLLDRR (153 aa). 2 disulfides stabilise this stretch: C178-C250 and C257-C275. H300 contacts Zn(2+). The active site involves E301. Residues H304 and D315 each coordinate Zn(2+).

It belongs to the peptidase M35 family. Zn(2+) is required as a cofactor.

It localises to the secreted. The catalysed reaction is Preferential cleavage of bonds with hydrophobic residues in P1'. Also 3-Asn-|-Gln-4 and 8-Gly-|-Ser-9 bonds in insulin B chain.. In terms of biological role, secreted metalloproteinase that allows assimilation of proteinaceous substrates. Shows high activities on basic nuclear substrates such as histone and protamine. The protein is Neutral protease 2 homolog NFIA_102630 of Neosartorya fischeri (strain ATCC 1020 / DSM 3700 / CBS 544.65 / FGSC A1164 / JCM 1740 / NRRL 181 / WB 181) (Aspergillus fischerianus).